A 437-amino-acid polypeptide reads, in one-letter code: Phosphoglucosamine mutase (437 aa).

Ser-101 functions as the Phosphoserine intermediate in the catalytic mechanism. The Mg(2+) site is built by Ser-101, Asp-234, Asp-236, and Asp-238. The residue at position 101 (Ser-101) is a Phosphoserine.

The protein belongs to the phosphohexose mutase family. The cofactor is Mg(2+). Activated by phosphorylation.

It carries out the reaction alpha-D-glucosamine 1-phosphate = D-glucosamine 6-phosphate. In terms of biological role, catalyzes the conversion of glucosamine-6-phosphate to glucosamine-1-phosphate. The chain is Phosphoglucosamine mutase from Thermus thermophilus (strain ATCC BAA-163 / DSM 7039 / HB27).